Reading from the N-terminus, the 254-residue chain is 4-hydroxy-tetrahydrodipicolinate reductase (254 aa).

Residues 8 to 13 (GGSGRV), 87 to 89 (GTT), and 111 to 114 (ATNM) each bind NAD(+). Histidine 143 functions as the Proton donor/acceptor in the catalytic mechanism. Histidine 144 is a (S)-2,3,4,5-tetrahydrodipicolinate binding site. Catalysis depends on lysine 147, which acts as the Proton donor. A (S)-2,3,4,5-tetrahydrodipicolinate-binding site is contributed by 153–154 (GT).

This sequence belongs to the DapB family.

It localises to the cytoplasm. It carries out the reaction (S)-2,3,4,5-tetrahydrodipicolinate + NAD(+) + H2O = (2S,4S)-4-hydroxy-2,3,4,5-tetrahydrodipicolinate + NADH + H(+). The catalysed reaction is (S)-2,3,4,5-tetrahydrodipicolinate + NADP(+) + H2O = (2S,4S)-4-hydroxy-2,3,4,5-tetrahydrodipicolinate + NADPH + H(+). Its pathway is amino-acid biosynthesis; L-lysine biosynthesis via DAP pathway; (S)-tetrahydrodipicolinate from L-aspartate: step 4/4. In terms of biological role, catalyzes the conversion of 4-hydroxy-tetrahydrodipicolinate (HTPA) to tetrahydrodipicolinate. The polypeptide is 4-hydroxy-tetrahydrodipicolinate reductase (Nitratiruptor sp. (strain SB155-2)).